The following is a 257-amino-acid chain: MLAKRLVPCLDVKDGKVVKGVQFRNHEIVGDIVPLAARYAEEGADELVFYDITASAHERVVDKSWVSRVAEQIDIPFCVAGGIKTISQARELLAFGADKISINSPALTDPSLISRLQDEFGRQCIVIGIDSFFDASSNSYKVKQFTGDEAATKDTQWFTQDWVEEVQKRGCGEIVLNVMNQDGVRGGYDIKQLSLVRAICDVPLIASGGAGAMAHFRDVFIEAKVDAALAASVFHKAIINIGELKAYLAAEGIAIRR.

Residues D11 and D130 contribute to the active site.

The protein belongs to the HisA/HisF family. In terms of assembly, heterodimer of HisH and HisF.

It is found in the cytoplasm. It carries out the reaction 5-[(5-phospho-1-deoxy-D-ribulos-1-ylimino)methylamino]-1-(5-phospho-beta-D-ribosyl)imidazole-4-carboxamide + L-glutamine = D-erythro-1-(imidazol-4-yl)glycerol 3-phosphate + 5-amino-1-(5-phospho-beta-D-ribosyl)imidazole-4-carboxamide + L-glutamate + H(+). Its pathway is amino-acid biosynthesis; L-histidine biosynthesis; L-histidine from 5-phospho-alpha-D-ribose 1-diphosphate: step 5/9. IGPS catalyzes the conversion of PRFAR and glutamine to IGP, AICAR and glutamate. The HisF subunit catalyzes the cyclization activity that produces IGP and AICAR from PRFAR using the ammonia provided by the HisH subunit. The protein is Imidazole glycerol phosphate synthase subunit HisF of Shewanella putrefaciens (strain CN-32 / ATCC BAA-453).